A 1226-amino-acid chain; its full sequence is Double-stranded RNA-specific adenosine deaminase (1226 aa).

Position 26 is an asymmetric dimethylarginine (R26). The Z-binding 1 domain maps to 133–199; sequence LSIYQDQEQR…GTPPLWKIAV (67 aa). The interaction with Z-DNA stretch occupies residues 133–202; the sequence is LSIYQDQEQR…PLWKIAVSTQ (70 aa). Disordered regions lie at residues 208 to 238 and 258 to 286; these read SGVV…TSVS and GVVR…STSA. S285 carries the phosphoserine modification. Positions 293-357 constitute a Z-binding 2 domain; it reads FLDMAEIKEK…TTPPIWHLTD (65 aa). Glycyl lysine isopeptide (Lys-Gly) (interchain with G-Cter in SUMO2) cross-links involve residues K384 and K408. Residue K418 forms a Glycyl lysine isopeptide (Lys-Gly) (interchain with G-Cter in SUMO); alternate linkage. A Glycyl lysine isopeptide (Lys-Gly) (interchain with G-Cter in SUMO1); alternate cross-link involves residue K418. K418 participates in a covalent cross-link: Glycyl lysine isopeptide (Lys-Gly) (interchain with G-Cter in SUMO2); alternate. S481 carries the post-translational modification Phosphoserine. The region spanning 503 to 571 is the DRBM 1 domain; the sequence is NPISGLLEYA…AMKAMTILLE (69 aa). The span at 574–597 shows a compositional bias: basic and acidic residues; sequence KAKDSGKSEESSHYSTEKESEKTA. The interval 574–610 is disordered; that stretch reads KAKDSGKSEESSHYSTEKESEKTAESQTPTPSATSFF. Residue K580 forms a Glycyl lysine isopeptide (Lys-Gly) (interchain with G-Cter in SUMO2) linkage. The span at 600 to 610 shows a compositional bias: polar residues; that stretch reads QTPTPSATSFF. T601 and T603 each carry phosphothreonine. A phosphoserine mark is found at S614, S629, and S636. Residues 614–682 form the DRBM 2 domain; sequence SPVTTLLECM…AEEAMKALHG (69 aa). Residues 716-725 are N-terminal extension of DRBM 3 and constituent of a bi-partite nuclear localization signal; sequence IGELVRYLNT. The DRBM 3 domain maps to 726 to 794; that stretch reads NPVGGLLEYA…ADAALRVLIG (69 aa). The segment at 795–801 is C-terminal extension of DRBM 3 and constituent of a bi-partite nuclear localization signal; that stretch reads ENEKAER. T808 carries the post-translational modification Phosphothreonine. Phosphoserine is present on residues S814, S823, and S825. K875 participates in a covalent cross-link: Glycyl lysine isopeptide (Lys-Gly) (interchain with G-Cter in SUMO2). The 336-residue stretch at 886–1221 folds into the A to I editase domain; it reads SLGTGNRCVK…ISKPQEEKNF (336 aa). Residue H910 participates in Zn(2+) binding. Residue E912 is the Proton donor of the active site. The Zn(2+) site is built by C966 and C1036.

As to quaternary structure, homodimer. Homodimerization is essential for its catalytic activity. Isoform 5 can form heterodimers with ADARB1/ADAR2. Isoform 1 interacts with ILF2/NF45 and ILF3/NF90. Binding to ILF3/NF90 up-regulates ILF3-mediated gene expression. Isoform 1 and isoform 5 (via DRBM 3 domain) interact with TNPO1. Isoform 5 (via DRBM domains) interacts with XPO5. Isoform 1 and isoform 5 can interact with EIF2AK2/PKR and UPF1. Post-translationally, sumoylation reduces RNA-editing activity. As to expression, ubiquitously expressed, highest levels were found in brain and lung. Isoform 5 is expressed at higher levels in astrocytomas as compared to normal brain tissue and expression increases strikingly with the severity of the tumor, being higher in the most aggressive tumors.

It is found in the cytoplasm. The protein localises to the nucleus. Its subcellular location is the nucleolus. The catalysed reaction is adenosine in double-stranded RNA + H2O + H(+) = inosine in double-stranded RNA + NH4(+). Catalyzes the hydrolytic deamination of adenosine to inosine in double-stranded RNA (dsRNA) referred to as A-to-I RNA editing. This may affect gene expression and function in a number of ways that include mRNA translation by changing codons and hence the amino acid sequence of proteins since the translational machinery read the inosine as a guanosine; pre-mRNA splicing by altering splice site recognition sequences; RNA stability by changing sequences involved in nuclease recognition; genetic stability in the case of RNA virus genomes by changing sequences during viral RNA replication; and RNA structure-dependent activities such as microRNA production or targeting or protein-RNA interactions. Can edit both viral and cellular RNAs and can edit RNAs at multiple sites (hyper-editing) or at specific sites (site-specific editing). Its cellular RNA substrates include: bladder cancer-associated protein (BLCAP), neurotransmitter receptors for glutamate (GRIA2) and serotonin (HTR2C) and GABA receptor (GABRA3). Site-specific RNA editing of transcripts encoding these proteins results in amino acid substitutions which consequently alters their functional activities. Exhibits low-level editing at the GRIA2 Q/R site, but edits efficiently at the R/G site and HOTSPOT1. Its viral RNA substrates include: hepatitis C virus (HCV), vesicular stomatitis virus (VSV), measles virus (MV), hepatitis delta virus (HDV), and human immunodeficiency virus type 1 (HIV-1). Exhibits either a proviral (HDV, MV, VSV and HIV-1) or an antiviral effect (HCV) and this can be editing-dependent (HDV and HCV), editing-independent (VSV and MV) or both (HIV-1). Impairs HCV replication via RNA editing at multiple sites. Enhances the replication of MV, VSV and HIV-1 through an editing-independent mechanism via suppression of EIF2AK2/PKR activation and function. Stimulates both the release and infectivity of HIV-1 viral particles by an editing-dependent mechanism where it associates with viral RNAs and edits adenosines in the 5'UTR and the Rev and Tat coding sequence. Can enhance viral replication of HDV via A-to-I editing at a site designated as amber/W, thereby changing an UAG amber stop codon to an UIG tryptophan (W) codon that permits synthesis of the large delta antigen (L-HDAg) which has a key role in the assembly of viral particles. However, high levels of ADAR1 inhibit HDV replication. The polypeptide is Double-stranded RNA-specific adenosine deaminase (ADAR) (Homo sapiens (Human)).